A 346-amino-acid polypeptide reads, in one-letter code: Cyclin-dependent kinase 20 (346 aa).

In terms of domain architecture, Protein kinase spans Tyr4–Phe288. Residues Ile10 to Val18 and Lys33 each bind ATP. Asp127 acts as the Proton acceptor in catalysis. The segment at Ser298–His324 is disordered. The segment covering Pro303–Pro318 has biased composition (pro residues).

Belongs to the protein kinase superfamily. CMGC Ser/Thr protein kinase family. CDC2/CDKX subfamily. As to quaternary structure, monomer. Interacts with TBC1D32 and MAK.

The protein resides in the nucleus. The protein localises to the cytoplasm. It localises to the cell projection. It is found in the cilium. The catalysed reaction is L-seryl-[protein] + ATP = O-phospho-L-seryl-[protein] + ADP + H(+). It catalyses the reaction L-threonyl-[protein] + ATP = O-phospho-L-threonyl-[protein] + ADP + H(+). Required for high-level Shh responses in the developing neural tube. Together with TBC1D32, controls the structure of the primary cilium by coordinating assembly of the ciliary membrane and axoneme, allowing GLI2 to be properly activated in response to SHH signaling. Involved in cell growth. Activates CDK2, a kinase involved in the control of the cell cycle, by phosphorylating residue 'Thr-160'. The protein is Cyclin-dependent kinase 20 (Cdk20) of Rattus norvegicus (Rat).